We begin with the raw amino-acid sequence, 1707 residues long: Histone-lysine N-methyltransferase SETD1A (1707 aa).

The interval 60–89 (LQDPRCHVRSKNRDFSLPVPKFKLDEFYIG) is interaction with WDR82. Residues 84–172 (DEFYIGQIPL…NIIHAQLDIK (89 aa)) enclose the RRM domain. 7 disordered regions span residues 194-308 (PTGG…YQDA), 331-363 (TAAT…RSSD), 381-486 (SYPP…AQHS), 506-655 (LASD…PPPH), 834-854 (AKPF…EKTK), 891-1251 (PSFK…GTEV), and 1264-1293 (ARRG…RPLL). Polar residues predominate over residues 239-277 (NGTPCSQDTSFSSSRQDTPSSFGQFTPQSSQGTPYTSRG). 2 stretches are compositionally biased toward low complexity: residues 278 to 295 (STPY…TSTS) and 331 to 357 (TAAT…SSSS). Pro residues predominate over residues 430-440 (SEAPPPEPPEP). Ser459 and Ser464 each carry phosphoserine. The span at 459 to 473 (SPRPASPARSGSPAP) shows a compositional bias: low complexity. The segment covering 474 to 486 (ETTNESVPFAQHS) has biased composition (polar residues). Phosphoserine occurs at positions 508 and 565. The segment covering 568–578 (ANGQNQASPCS) has biased composition (polar residues). 2 stretches are compositionally biased toward pro residues: residues 593–617 (SPPP…PPPY) and 624–655 (GYPP…PPPH). Residues 844 to 854 (QAKEEDKEKTK) show a composition bias toward basic and acidic residues. Position 915 is a phosphoserine (Ser915). 2 stretches are compositionally biased toward acidic residues: residues 918–927 (AEEDEDDPEQ) and 976–992 (KDEE…DREE). Basic and acidic residues predominate over residues 993 to 1002 (AVDTTKKETE). Residues 1003 to 1012 (VSDGEDEESD) are compositionally biased toward acidic residues. Residues 1032–1060 (DSESSSSSSSSSSSSSSSSSSSSSSSSES) show a composition bias toward low complexity. The span at 1077–1094 (ASPPPREVPVPTPAPVEV) shows a compositional bias: pro residues. Phosphoserine is present on Ser1103. The span at 1127–1145 (PSAPLRPPEPPAGPPAPAP) shows a compositional bias: pro residues. The span at 1275–1284 (EDSEATETSD) shows a compositional bias: acidic residues. The short motif at 1299-1303 (EHNYA) is the HCFC1-binding motif (HBM) element. Disordered stretches follow at residues 1307–1417 (KPTP…AYEP) and 1472–1499 (NLTT…SEGY). Positions 1308 to 1323 (PTPPAPALRPPEPVPA) are enriched in pro residues. Residues 1360–1377 (EGEEEGEEEGEEEEEESS) show a composition bias toward acidic residues. Basic residues predominate over residues 1390-1403 (RRRSLRSHARRRRP). A compositionally biased stretch (pro residues) spans 1404-1414 (PPPPPPPPPRA). Positions 1415–1450 (YEPRSEFEQMTILYDIWNSGLDSEDMSYLRLTYERL) are interaction with CFP1. The segment at 1450–1537 (LLQQTSGADW…GTNRVLSERR (88 aa)) is interaction with ASH2L, RBBP5 and WDR5. The WDR5 interaction motif (WIN) motif lies at 1492–1497 (GSARSE). The RxxxRR motif motif lies at 1537–1542 (RSEQRR). One can recognise an SET domain in the interval 1568-1685 (KKLRFGRSRI…VDEEITYDYK (118 aa)). Tyr1684 contacts S-adenosyl-L-methionine. Positions 1691 to 1707 (NKIPCLCGTESCRGSLN) constitute a Post-SET domain.

The protein belongs to the class V-like SAM-binding methyltransferase superfamily. In terms of assembly, component of the SET1A/COMPASS complex composed of the catalytic subunit SETD1A, WDR5, WDR82, RBBP5, ASH2L/ASH2, CXXC1/CFP1, HCFC1 and DPY30 homotrimer. Forms a core complex with the evolutionary conserved subcomplex WRAD composed of WDR5, RBBP5, ASH2L/ASH2 and DPY30 subunits; WRAD differentially stimulates the methyltransferase activity. Interacts with BOD1L1 (via COMPASS-Shg1 domain) at replication forks. Interacts with HCFC1. Interacts with ASH2/ASH2L. Interacts with CXXC1/CFP1. Interacts with RBBP5. Interacts (via N-terminal region) with WDR82; the interaction is direct. Interacts (via the RRM domain) with hyperphosphorylated C-terminal domain (CTD) of RNA polymerase II large subunit (POLR2A) only in the presence of WDR82. Binds specifically to CTD heptad repeats phosphorylated on 'Ser-5' of each heptad. Interacts with ZNF335. Interacts with SUPT6H. Interacts with NAP1L1. Interacts (via WIN motif) with WDR5.

It is found in the nucleus speckle. The protein localises to the chromosome. Its subcellular location is the cytoplasm. The enzyme catalyses L-lysyl(4)-[histone H3] + S-adenosyl-L-methionine = N(6)-methyl-L-lysyl(4)-[histone H3] + S-adenosyl-L-homocysteine + H(+). The catalysed reaction is N(6)-methyl-L-lysyl(4)-[histone H3] + S-adenosyl-L-methionine = N(6),N(6)-dimethyl-L-lysyl(4)-[histone H3] + S-adenosyl-L-homocysteine + H(+). It carries out the reaction N(6),N(6)-dimethyl-L-lysyl(4)-[histone H3] + S-adenosyl-L-methionine = N(6),N(6),N(6)-trimethyl-L-lysyl(4)-[histone H3] + S-adenosyl-L-homocysteine + H(+). Histone methyltransferase that catalyzes methyl group transfer from S-adenosyl-L-methionine to the epsilon-amino group of 'Lys-4' of histone H3 (H3K4) via a non-processive mechanism. Part of chromatin remodeling machinery, forms H3K4me1, H3K4me2 and H3K4me3 methylation marks at active chromatin sites where transcription and DNA repair take place. Responsible for H3K4me3 enriched promoters and transcriptional programming of inner mass stem cells and neuron progenitors during embryogenesis. Required for H3K4me1 mark at stalled replication forks. Mediates FANCD2-dependent nucleosome remodeling and RAD51 nucleofilaments stabilization at reversed forks, protecting them from nucleolytic degradation. Does not methylate 'Lys-4' of histone H3 if the neighboring 'Lys-9' residue is already methylated. Binds RNAs involved in RNA processing and the DNA damage response. In Homo sapiens (Human), this protein is Histone-lysine N-methyltransferase SETD1A (SETD1A).